A 316-amino-acid polypeptide reads, in one-letter code: L-lactate dehydrogenase (316 aa).

Residues valine 15, aspartate 36, arginine 41, tyrosine 66, and 80-81 (GA) each bind NAD(+). Substrate contacts are provided by residues glutamine 83, arginine 90, and 122 to 125 (NPVD). Residues 120-122 (ATN) and threonine 145 contribute to the NAD(+) site. 150–153 (DTAR) serves as a coordination point for substrate. Beta-D-fructose 1,6-bisphosphate contacts are provided by arginine 155 and histidine 170. The active-site Proton acceptor is histidine 177. Tyrosine 222 is modified (phosphotyrosine). Threonine 231 lines the substrate pocket. The disordered stretch occupies residues 287–316 (DPGLSDEEREALRDSARALRDSRADLTVGT). Over residues 296 to 310 (EALRDSARALRDSRA) the composition is skewed to basic and acidic residues.

This sequence belongs to the LDH/MDH superfamily. LDH family. Homotetramer.

It is found in the cytoplasm. The enzyme catalyses (S)-lactate + NAD(+) = pyruvate + NADH + H(+). It functions in the pathway fermentation; pyruvate fermentation to lactate; (S)-lactate from pyruvate: step 1/1. Its activity is regulated as follows. Allosterically activated by fructose 1,6-bisphosphate (FBP). Its function is as follows. Catalyzes the conversion of lactate to pyruvate. In Salinibacter ruber (strain DSM 13855 / M31), this protein is L-lactate dehydrogenase.